The following is a 977-amino-acid chain: MLLWVILLVLAPVSGQFARTPRPIIFLQPPWTTVFQGERVTLTCKGFRFYSPQKTKWYHRYLGKEILRETPDNILEVQESGEYRCQAQGSPLSSPVHLDFSSASLILQAPLSVFEGDSVVLRCRAKAEVTLNNTIYKNDNVLAFLNKRTDFHIPHACLKDNGAYRCTGYKESCCPVSSNTVKIQVQEPFTRPVLRASSFQPISGNPVTLTCETQLSLERSDVPLRFRFFRDDQTLGLGWSLSPNFQITAMWSKDSGFYWCKAATMPYSVISDSPRSWIQVQIPASHPVLTLSPEKALNFEGTKVTLHCETQEDSLRTLYRFYHEGVPLRHKSVRCERGASISFSLTTENSGNYYCTADNGLGAKPSKAVSLSVTVPVSHPVLNLSSPEDLIFEGAKVTLHCEAQRGSLPILYQFHHEGAALERRSANSAGGVAISFSLTAEHSGNYYCTADNGFGPQRSKAVSLSVTVPVSHPVLTLSSAEALTFEGATVTLHCEVQRGSPQILYQFYHEDMPLWSSSTPSVGRVSFSFSLTEGHSGNYYCTADNGFGPQRSEVVSLFVTVPVSRPILTLRVPRAQAVVGDLLELHCEAPRGSPPILYWFYHEDVTLGSSSAPSGGEASFNLSLTAEHSGNYSCEANNGLVAQHSDTISLSVIVPVSRPILTFRAPRAQAVVGDLLELHCEALRGSSPILYWFYHEDVTLGKISAPSGGGASFNLSLTTEHSGIYSCEADNGLEAQRSEMVTLKVAVPVSRPVLTLRAPGTHAAVGDLLELHCEALRGSPLILYRFFHEDVTLGNRSSPSGGASLNLSLTAEHSGNYSCEADNGLGAQRSETVTLYITGLTANRSGPFATGVAGGLLSIAGLAAGALLLYCWLSRKAGRKPASDPARSPSDSDSQEPTYHNVPAWEELQPVYTNANPRGENVVYSEVRIIQEKKKHAVASDPRHLRNKGSPIIYSEVKVASTPVSGSLFLASSAPHR.

Positions 1 to 15 are cleaved as a signal peptide; the sequence is MLLWVILLVLAPVSG. The Extracellular segment spans residues 16–851; that stretch reads QFARTPRPII…ANRSGPFATG (836 aa). Ig-like C2-type domains are found at residues 23–101, 188–271, 287–374, 380–463, 473–556, 566–651, 659–744, and 752–834; these read PIIF…LDFS, PFTR…SVIS, PVLT…LSVT, PVLN…KAVS, PVLT…EVVS, PILT…ISLS, PILT…VTLK, and PVLT…ETVT. 3 disulfides stabilise this stretch: Cys44–Cys85, Cys211–Cys260, and Cys308–Cys355. N-linked (GlcNAc...) asparagine glycosylation occurs at Asn383. Cystine bridges form between Cys401–Cys448, Cys494–Cys541, Cys587–Cys634, Cys680–Cys727, and Cys773–Cys819. A helical membrane pass occupies residues 852–872; the sequence is VAGGLLSIAGLAAGALLLYCW. At 873–977 the chain is on the cytoplasmic side; it reads LSRKAGRKPA…LFLASSAPHR (105 aa). Residues 879–898 form a disordered region; that stretch reads RKPASDPARSPSDSDSQEPT. The span at 883 to 892 shows a compositional bias: low complexity; the sequence is SDPARSPSDS. 4 short sequence motifs (ITIM motif) span residues 897–902, 910–915, 922–927, and 952–957; these read PTYHNV, PVYTNA, VVYSEV, and IIYSEV.

As to quaternary structure, interacts with CR2. Interacts with CD19. As to expression, expressed in marginal zone B-cells, immunoblasts, tonsillar germinal center centrocytes and in the intraepithelial and interfollicular regions of the tonsil. Expressed in many lymphoma cell lines and on hairy cell leukemia cells. Isoform 1, isoform 3, isoform 4 and isoform 5 are detected in lymph node, spleen, bone marrow, and small intestine with preponderance of isoform 3. Expressed in mature and memory B-cells and down-regulated in germinal center cells (at protein level).

Its subcellular location is the cell membrane. Its function is as follows. Plays an important role in B-cell response to antigen that acts both as a negative or positive coreceptor. Inhibits B-cell receptor (BCR) signaling in the absence of CR2 stimulation but engagement with CR2 and the BCR lead to a superior calcium response compared to CR2 and BCR costimulation. May be involved in B-cell development and differentiation in peripheral lymphoid organs and may be useful markers of B-cell stages. May have an immunoregulatory role in marginal zone B-cells. May play a role in fertilization. The chain is Fc receptor-like protein 5 (FCRL5) from Homo sapiens (Human).